The chain runs to 384 residues: GDSL esterase/lipase At1g71691 (384 aa).

A signal peptide spans 1-27; sequence MAFHFRRLCFFSALLAVVLQLLHGVSG. The active-site Nucleophile is S62. Active-site residues include D348 and H351.

It belongs to the 'GDSL' lipolytic enzyme family.

It localises to the secreted. In Arabidopsis thaliana (Mouse-ear cress), this protein is GDSL esterase/lipase At1g71691.